We begin with the raw amino-acid sequence, 161 residues long: Periplasmic chaperone Spy (161 aa).

Residues 1 to 23 (MRKLTALFVASTLALGAANLAHA) form the signal peptide. Residues 140-161 (ANFEKRLTERPAAKGKMPATAE) are disordered. Basic and acidic residues predominate over residues 142-151 (FEKRLTERPA).

Belongs to the CpxP/Spy family. As to quaternary structure, homodimer.

Its subcellular location is the periplasm. An ATP-independent periplasmic chaperone, decreases protein aggregation and helps protein refolding. Binds substrate over a large region of its convex inner surface. Substrate protein folds while it is bound to chaperone. Increasing Spy flexibility increases its substrate affinity and overall chaperone activity (shown for 3 different substrates). Protects proteins in vitro against tannin inactivation; tannins have antimicrobial activity. Overexpression enhances the stability of otherwise unstable periplasmic proteins. In Escherichia coli (strain K12), this protein is Periplasmic chaperone Spy.